Here is a 340-residue protein sequence, read N- to C-terminus: DNA-directed RNA polymerase subunit alpha (340 aa).

Positions 1 to 237 (MSSDELVYMN…EQMNPFINFD (237 aa)) are alpha N-terminal domain (alpha-NTD). The tract at residues 256 to 340 (FNENLYRSVD…PEEDQIKEGE (85 aa)) is alpha C-terminal domain (alpha-CTD).

It belongs to the RNA polymerase alpha chain family. Homodimer. The RNAP catalytic core consists of 2 alpha, 1 beta, 1 beta' and 1 omega subunit. When a sigma factor is associated with the core the holoenzyme is formed, which can initiate transcription.

The catalysed reaction is RNA(n) + a ribonucleoside 5'-triphosphate = RNA(n+1) + diphosphate. DNA-dependent RNA polymerase catalyzes the transcription of DNA into RNA using the four ribonucleoside triphosphates as substrates. This chain is DNA-directed RNA polymerase subunit alpha, found in Desulforapulum autotrophicum (strain ATCC 43914 / DSM 3382 / VKM B-1955 / HRM2) (Desulfobacterium autotrophicum).